The sequence spans 570 residues: Rqc2 homolog RqcH (570 aa).

The tract at residues 1 to 173 is NFACT-N domain; sequence MSFDGMFTYG…LPPAQDKISP (173 aa). Positions 179–281 are hhH domain; that stretch reads DDILRHLSFQ…ELLDRFYFGK (103 aa). Coiled coils occupy residues 279 to 336 and 368 to 430; these read FGKA…TANL and TPSE…VEGK. Residues 282–434 form a coiled-coil-M (CCM) region; it reads AERDRVKQQA…ELVEGKYLRP (153 aa). The tract at residues 446 to 570 is NFACT-R; sequence HNPVLETYES…ADTVIKLKKS (125 aa).

Belongs to the NEMF family. Associates with isolated or stalled 50S ribosomal subunits. Binds to RqcP. Interacts with ribosomal protein uL11. Displaced from the 50S subunit by thiostrepton. In crystallized 50S subunits RqcH is variously associated with A/P-site tRNA, P-site tRNA and RqcP, an E-site tRNA or A- and P-site tRNAs and RqcP2(YlmH).

In terms of biological role, key component of the ribosome quality control system (RQC), a ribosome-associated complex that mediates the extraction of incompletely synthesized nascent chains from stalled ribosomes and their subsequent degradation. RqcH recruits Ala-charged tRNA, and with RqcP directs the elongation of stalled nascent chains on 50S ribosomal subunits, leading to non-templated C-terminal alanine extensions (Ala tail). The Ala tail promotes nascent chain degradation. RqcH, RqcP and charged tRNA(Ala) are necessary and sufficient to add an Ala tail to a model stalled nascent peptide; does not add Val. Binds the P-site tRNA in 50S ribosomal subunit, unwinds the anticodon stem and interacts with the splayed anticodon. Selectively binds tRNA(Ala) isoacceptors, even in the absence of the 50S ribosomal subunit. Adds between 1 and at least 8 Ala residues to the nascent chain; detection of the Ala tail requires either deletion of clpP or its inhibition. Binds to 50S ribosomal subunits, at least 30% of which contain a P-site tRNA and thus are obstructed. In Bacillus subtilis (strain 168), this protein is Rqc2 homolog RqcH.